A 351-amino-acid polypeptide reads, in one-letter code: GTPase Obg (351 aa).

The Obg domain occupies methionine 1–isoleucine 159. The OBG-type G domain occupies alanine 160 to arginine 327. GTP is bound by residues glycine 166–serine 173, phenylalanine 191–threonine 195, aspartate 212–glycine 215, asparagine 279–aspartate 282, and serine 308–alanine 310. 2 residues coordinate Mg(2+): serine 173 and threonine 193.

Belongs to the TRAFAC class OBG-HflX-like GTPase superfamily. OBG GTPase family. In terms of assembly, monomer. Mg(2+) is required as a cofactor.

The protein localises to the cytoplasm. An essential GTPase which binds GTP, GDP and possibly (p)ppGpp with moderate affinity, with high nucleotide exchange rates and a fairly low GTP hydrolysis rate. Plays a role in control of the cell cycle, stress response, ribosome biogenesis and in those bacteria that undergo differentiation, in morphogenesis control. The polypeptide is GTPase Obg (Rhodospirillum centenum (strain ATCC 51521 / SW)).